The chain runs to 457 residues: Ribulose bisphosphate carboxylase-like protein (457 aa).

Residues Lys-199, Asp-201, and Glu-202 each coordinate Mg(2+). Lys-199 is subject to N6-carboxylysine. A disordered region spans residues 426–457 (AIAAFGKPAHGQAASPQPSEQASEPDAAGGDS).

Belongs to the RuBisCO large chain family. Type IV subfamily. It depends on Mg(2+) as a cofactor.

In terms of biological role, may be involved in sulfur metabolism and oxidative stress response. Does not show RuBisCO activity. This chain is Ribulose bisphosphate carboxylase-like protein, found in Allochromatium vinosum (strain ATCC 17899 / DSM 180 / NBRC 103801 / NCIMB 10441 / D) (Chromatium vinosum).